Reading from the N-terminus, the 1128-residue chain is Probable serine/threonine-protein kinase DDB_G0283337 (1128 aa).

Residues Met1–Asn17 show a composition bias toward low complexity. Disordered regions lie at residues Met1–Pro21, Ile60–Asn100, Arg131–Asn151, Asn236–Asn256, and Asn375–Gln504. 2 stretches are compositionally biased toward low complexity: residues Asn243–Asn256 and Asn375–Ser502. Positions Leu777–Glu1054 constitute a Protein kinase domain. Residues Ile783–Val791 and Lys809 contribute to the ATP site. Asp904 serves as the catalytic Proton acceptor.

The protein belongs to the protein kinase superfamily. Ser/Thr protein kinase family.

The enzyme catalyses L-seryl-[protein] + ATP = O-phospho-L-seryl-[protein] + ADP + H(+). The catalysed reaction is L-threonyl-[protein] + ATP = O-phospho-L-threonyl-[protein] + ADP + H(+). The chain is Probable serine/threonine-protein kinase DDB_G0283337 from Dictyostelium discoideum (Social amoeba).